We begin with the raw amino-acid sequence, 84 residues long: Sec-independent protein translocase protein TatA (84 aa).

The chain crosses the membrane as a helical span at residues 1–21 (MPNLGVPELLIIALVIFLLFG). Positions 42 to 57 (EMDEMKTDGDKKELAE) are enriched in basic and acidic residues. The segment at 42 to 84 (EMDEMKTDGDKKELAEKQAPTAEQQQAQDLAQPKSEQPNEHNA) is disordered. Polar residues predominate over residues 62 to 77 (TAEQQQAQDLAQPKSE).

It belongs to the TatA/E family. As to quaternary structure, the Tat system comprises two distinct complexes: a TatABC complex, containing multiple copies of TatA, TatB and TatC subunits, and a separate TatA complex, containing only TatA subunits. Substrates initially bind to the TatABC complex, which probably triggers association of the separate TatA complex to form the active translocon.

It is found in the cell membrane. Its function is as follows. Part of the twin-arginine translocation (Tat) system that transports large folded proteins containing a characteristic twin-arginine motif in their signal peptide across membranes. TatA could form the protein-conducting channel of the Tat system. The chain is Sec-independent protein translocase protein TatA from Corynebacterium jeikeium (strain K411).